The primary structure comprises 444 residues: Chromosome partition protein MukF (444 aa).

The segment at 212 to 240 (LDETSGNLRELQDTLNAAGDKLQAQLLRI) is leucine-zipper.

It belongs to the MukF family. Interacts, and probably forms a ternary complex, with MukE and MukB via its C-terminal region. The complex formation is stimulated by calcium or magnesium. It is required for an interaction between MukE and MukB.

It is found in the cytoplasm. The protein localises to the nucleoid. In terms of biological role, involved in chromosome condensation, segregation and cell cycle progression. May participate in facilitating chromosome segregation by condensation DNA from both sides of a centrally located replisome during cell division. Not required for mini-F plasmid partitioning. Probably acts via its interaction with MukB and MukE. Overexpression results in anucleate cells. It has a calcium binding activity. This chain is Chromosome partition protein MukF, found in Haemophilus influenzae (strain ATCC 51907 / DSM 11121 / KW20 / Rd).